A 95-amino-acid polypeptide reads, in one-letter code: Large ribosomal subunit protein uL23 (95 aa).

The protein belongs to the universal ribosomal protein uL23 family. As to quaternary structure, contacts protein L29, and trigger factor when it is bound to the ribosome. Part of the 50S ribosomal subunit.

In terms of biological role, one of the early assembly proteins it binds 23S rRNA. One of the proteins that surrounds the polypeptide exit tunnel on the outside of the ribosome. Forms the main docking site for trigger factor binding to the ribosome. The chain is Large ribosomal subunit protein uL23 from Geobacillus stearothermophilus (Bacillus stearothermophilus).